A 405-amino-acid polypeptide reads, in one-letter code: Venom serine protease 34 (405 aa).

An N-terminal signal peptide occupies residues Met-1–Thr-35. 2 disulfides stabilise this stretch: Cys-42–Cys-70 and Cys-95–Cys-111. Residues Cys-42 to Asp-147 enclose the CUB domain. An N-linked (GlcNAc...) asparagine glycan is attached at Asn-113. The Peptidase S1 domain occupies Ile-161–Pro-397. Cys-188 and Cys-204 are oxidised to a cystine. Residue His-203 is the Charge relay system of the active site. N-linked (GlcNAc...) asparagine glycans are attached at residues Asn-209 and Asn-229. Asp-257 serves as the catalytic Charge relay system. 2 cysteine pairs are disulfide-bonded: Cys-323–Cys-336 and Cys-345–Cys-375. Residue Ser-349 is the Charge relay system of the active site.

It belongs to the peptidase S1 family. As to expression, expressed by the venom duct.

The protein localises to the secreted. The chain is Venom serine protease 34 from Apis mellifera (Honeybee).